The primary structure comprises 199 residues: Probable GTP-binding protein EngB (199 aa).

The EngB-type G domain occupies 28-199 (DLPEIALAGR…DSWDAILEQV (172 aa)). Residues 36–43 (GRSNVGKS), 63–67 (GKTQL), 81–84 (DVPG), 148–151 (TKAD), and 180–182 (FSS) each bind GTP. 2 residues coordinate Mg(2+): serine 43 and threonine 65.

The protein belongs to the TRAFAC class TrmE-Era-EngA-EngB-Septin-like GTPase superfamily. EngB GTPase family. Mg(2+) serves as cofactor.

Functionally, necessary for normal cell division and for the maintenance of normal septation. The protein is Probable GTP-binding protein EngB of Streptococcus pyogenes serotype M18 (strain MGAS8232).